A 360-amino-acid polypeptide reads, in one-letter code: DNA replication and repair protein RecF (360 aa).

ATP is bound at residue 33-40 (GENGSGKT).

The protein belongs to the RecF family.

Its subcellular location is the cytoplasm. The RecF protein is involved in DNA metabolism; it is required for DNA replication and normal SOS inducibility. RecF binds preferentially to single-stranded, linear DNA. It also seems to bind ATP. The protein is DNA replication and repair protein RecF of Rickettsia canadensis (strain McKiel).